The primary structure comprises 295 residues: Probable endonuclease 4 (295 aa).

Zn(2+) contacts are provided by histidine 78, histidine 118, glutamate 154, aspartate 188, histidine 191, histidine 225, aspartate 238, histidine 240, and glutamate 270.

This sequence belongs to the AP endonuclease 2 family. Zn(2+) is required as a cofactor.

The catalysed reaction is Endonucleolytic cleavage to 5'-phosphooligonucleotide end-products.. Functionally, endonuclease IV plays a role in DNA repair. It cleaves phosphodiester bonds at apurinic or apyrimidinic (AP) sites, generating a 3'-hydroxyl group and a 5'-terminal sugar phosphate. The chain is Probable endonuclease 4 from Vibrio campbellii (strain ATCC BAA-1116).